Consider the following 245-residue polypeptide: NAD(P)H-hydrate epimerase (245 aa).

One can recognise a YjeF N-terminal domain in the interval 21–221 (MREIDRLAVQ…DLGIPPAVYT (201 aa)). 72–76 (GNGGG) is a binding site for (6S)-NADPHX. Asn73 and Asp135 together coordinate K(+). (6S)-NADPHX is bound by residues 139-145 (GYSLLGA) and Asp168. Ser171 contributes to the K(+) binding site.

The protein belongs to the NnrE/AIBP family. Requires K(+) as cofactor.

The enzyme catalyses (6R)-NADHX = (6S)-NADHX. It catalyses the reaction (6R)-NADPHX = (6S)-NADPHX. Its function is as follows. Catalyzes the epimerization of the S- and R-forms of NAD(P)HX, a damaged form of NAD(P)H that is a result of enzymatic or heat-dependent hydration. This is a prerequisite for the S-specific NAD(P)H-hydrate dehydratase to allow the repair of both epimers of NAD(P)HX. The polypeptide is NAD(P)H-hydrate epimerase (Dehalogenimonas lykanthroporepellens (strain ATCC BAA-1523 / JCM 15061 / BL-DC-9)).